The sequence spans 210 residues: Vacuolar protein sorting-associated protein 28 homolog 2 (210 aa).

The region spanning 1 to 99 (MMEVKLWNDK…VTSGLPATVE (99 aa)) is the VPS28 N-terminal domain. A VPS28 C-terminal domain is found at 109-205 (SNSASIVAEC…SSYNSFMAAL (97 aa)).

This sequence belongs to the VPS28 family. Component of the endosomal sorting required for transport complex I (ESCRT-I), composed of ELC, VPS28 and VPS37. Interacts with ELC.

Its subcellular location is the endosome. In terms of biological role, component of the ESCRT-I complex (endosomal sorting complex required for transport I), a regulator of vesicular trafficking process. Required for the sorting of endocytic ubiquitinated cargos into multivesicular bodies (MVBs). Mediates the association to the ESCRT-0 complex. This chain is Vacuolar protein sorting-associated protein 28 homolog 2 (VPS28-2), found in Arabidopsis thaliana (Mouse-ear cress).